A 415-amino-acid polypeptide reads, in one-letter code: Serine hydroxymethyltransferase (415 aa).

(6S)-5,6,7,8-tetrahydrofolate contacts are provided by residues Leu-120 and 124–126 (GHL). Lys-229 carries the N6-(pyridoxal phosphate)lysine modification.

The protein belongs to the SHMT family. As to quaternary structure, homodimer. Requires pyridoxal 5'-phosphate as cofactor.

It localises to the cytoplasm. The enzyme catalyses (6R)-5,10-methylene-5,6,7,8-tetrahydrofolate + glycine + H2O = (6S)-5,6,7,8-tetrahydrofolate + L-serine. It participates in one-carbon metabolism; tetrahydrofolate interconversion. It functions in the pathway amino-acid biosynthesis; glycine biosynthesis; glycine from L-serine: step 1/1. Functionally, catalyzes the reversible interconversion of serine and glycine with tetrahydrofolate (THF) serving as the one-carbon carrier. This reaction serves as the major source of one-carbon groups required for the biosynthesis of purines, thymidylate, methionine, and other important biomolecules. Also exhibits THF-independent aldolase activity toward beta-hydroxyamino acids, producing glycine and aldehydes, via a retro-aldol mechanism. The polypeptide is Serine hydroxymethyltransferase (Pelotomaculum thermopropionicum (strain DSM 13744 / JCM 10971 / SI)).